Consider the following 260-residue polypeptide: Putative nudix hydrolase 6 (260 aa).

In terms of domain architecture, Nudix hydrolase spans 113 to 257 (PNHAADPIVS…SHFIDLLKES (145 aa)). The Nudix box motif lies at 148–170 (GMVDAGEHVSQTLRREFAEEAMH). Residues glutamate 163 and glutamate 167 each contribute to the Mg(2+) site.

This sequence belongs to the Nudix hydrolase family. The cofactor is Mg(2+). Requires Mn(2+) as cofactor.

In terms of biological role, probably mediates the hydrolysis of some nucleoside diphosphate derivatives. In Caenorhabditis elegans, this protein is Putative nudix hydrolase 6 (ndx-6).